We begin with the raw amino-acid sequence, 1357 residues long: DNA-directed RNA polymerase subunit beta (1357 aa).

It belongs to the RNA polymerase beta chain family. As to quaternary structure, the RNAP catalytic core consists of 2 alpha, 1 beta, 1 beta' and 1 omega subunit. When a sigma factor is associated with the core the holoenzyme is formed, which can initiate transcription.

It catalyses the reaction RNA(n) + a ribonucleoside 5'-triphosphate = RNA(n+1) + diphosphate. Functionally, DNA-dependent RNA polymerase catalyzes the transcription of DNA into RNA using the four ribonucleoside triphosphates as substrates. This Nitrosospira multiformis (strain ATCC 25196 / NCIMB 11849 / C 71) protein is DNA-directed RNA polymerase subunit beta.